We begin with the raw amino-acid sequence, 481 residues long: Leukocyte immunoglobulin-like receptor subfamily A member 6 (481 aa).

Positions 1–23 (MTPALTALLCLGLSLGPRTHVQA) are cleaved as a signal peptide. The Ig-like C2-type 1 domain maps to 24-118 (GPLPKPTLWA…PSDPLELVVT (95 aa)). The Extracellular portion of the chain corresponds to 24–447 (GPLPKPTLWA…SHAKDYTVEN (424 aa)). A disulfide bridge links C49 with C98. N139 carries an N-linked (GlcNAc...) asparagine glycan. 2 disulfide bridges follow: C144–C196 and C245–C296. Ig-like C2-type domains follow at residues 225-314 (PSLL…DPLN) and 323-408 (DRVS…HLLS). N301 and N340 each carry an N-linked (GlcNAc...) asparagine glycan. The cysteines at positions 345 and 396 are disulfide-linked. The disordered stretch occupies residues 418–439 (VSGPSGGPSLPPTGPPSTPASH). Positions 426 to 435 (SLPPTGPPST) are enriched in pro residues. The chain crosses the membrane as a helical span at residues 448 to 468 (LIRMGMAGLVLVVLGILLFEA). The Cytoplasmic segment spans residues 469-481 (QHSQRSPQDAARR).

It localises to the membrane. In terms of biological role, may act as receptor for class I MHC antigens. This is Leukocyte immunoglobulin-like receptor subfamily A member 6 (LILRA6) from Pan troglodytes (Chimpanzee).